A 312-amino-acid chain; its full sequence is Apolipoprotein E (312 aa).

The N-terminal stretch at 1–18 (MKALWALLLVPLLTGCLA) is a signal peptide. Repeat copies occupy residues 72–93 (VLMEDTMTEVKAYKKELEEQLG), 94–115 (PVAEETRARLAKEVQAAQARLG), 116–137 (ADMEDLRNRLGQYRNEVNTMLG), 138–159 (QSTEELRSRLSTHLRKMRKRLM), 160–181 (RDADDLQKRLAVYKAGAQEGAE), 182–203 (RGVSAIRERLGPLVEQGRQRTA), 204–225 (NLGSGAAQPLRDRAQALSDRIR), and 226–247 (GRLEEVGNQARDRLEEVRDQME). Positions 72–247 (VLMEDTMTEV…RLEEVRDQME (176 aa)) are 8 X 22 AA approximate tandem repeats. Position 135 is a methionine sulfoxide (M135). Residue S139 is modified to Phosphoserine. The segment at 150–160 (HLRKMRKRLMR) is LDL and other lipoprotein receptors binding. The interval 150-160 (HLRKMRKRLMR) is LDL receptor binding. 154–157 (MRKR) contributes to the heparin binding site. The interval 202–282 (TANLGSGAAQ…GWFEPLVEDM (81 aa)) is lipid-binding and lipoprotein association. 221–228 (SDRIRGRL) contributes to the heparin binding site. The tract at residues 258–312 (QQIRLQAEVFQARLKGWFEPLVEDMQRQWANLMEKIQASVATNSIASTTVPLENQ) is homooligomerization. The specificity for association with VLDL stretch occupies residues 270-282 (RLKGWFEPLVEDM).

This sequence belongs to the apolipoprotein A1/A4/E family. In terms of assembly, homotetramer. May interact with ABCA1; functionally associated with ABCA1 in the biogenesis of HDLs. May interact with APP/A4 amyloid-beta peptide; the interaction is extremely stable in vitro but its physiological significance is unclear. May interact with MAPT. May interact with MAP2. In the cerebrospinal fluid, interacts with secreted SORL1. Interacts with PMEL; this allows the loading of PMEL luminal fragment on ILVs to induce fibril nucleation. Post-translationally, APOE exists as multiple glycosylated and sialylated glycoforms within cells and in plasma. The extent of glycosylation and sialylation are tissue and context specific. Glycated in plasma VLDL. In terms of processing, phosphorylated by FAM20C in the extracellular medium.

It is found in the secreted. The protein resides in the extracellular space. Its subcellular location is the extracellular matrix. It localises to the extracellular vesicle. The protein localises to the endosome. It is found in the multivesicular body. Functionally, APOE is an apolipoprotein, a protein associating with lipid particles, that mainly functions in lipoprotein-mediated lipid transport between organs via the plasma and interstitial fluids. APOE is a core component of plasma lipoproteins and is involved in their production, conversion and clearance. Apolipoproteins are amphipathic molecules that interact both with lipids of the lipoprotein particle core and the aqueous environment of the plasma. As such, APOE associates with chylomicrons, chylomicron remnants, very low density lipoproteins (VLDL) and intermediate density lipoproteins (IDL) but shows a preferential binding to high-density lipoproteins (HDL). It also binds a wide range of cellular receptors including the LDL receptor/LDLR, the LDL receptor-related proteins LRP1, LRP2 and LRP8 and the very low-density lipoprotein receptor/VLDLR that mediate the cellular uptake of the APOE-containing lipoprotein particles. Finally, APOE also has a heparin-binding activity and binds heparan-sulfate proteoglycans on the surface of cells, a property that supports the capture and the receptor-mediated uptake of APOE-containing lipoproteins by cells. A main function of APOE is to mediate lipoprotein clearance through the uptake of chylomicrons, VLDLs, and HDLs by hepatocytes. APOE is also involved in the biosynthesis by the liver of VLDLs as well as their uptake by peripheral tissues ensuring the delivery of triglycerides and energy storage in muscle, heart and adipose tissues. By participating in the lipoprotein-mediated distribution of lipids among tissues, APOE plays a critical role in plasma and tissues lipid homeostasis. APOE is also involved in two steps of reverse cholesterol transport, the HDLs-mediated transport of cholesterol from peripheral tissues to the liver, and thereby plays an important role in cholesterol homeostasis. First, it is functionally associated with ABCA1 in the biogenesis of HDLs in tissues. Second, it is enriched in circulating HDLs and mediates their uptake by hepatocytes. APOE also plays an important role in lipid transport in the central nervous system, regulating neuron survival and sprouting. The polypeptide is Apolipoprotein E (Apoe) (Rattus rattus (Black rat)).